The following is a 268-amino-acid chain: Tetraspanin-33 (268 aa).

At 1 to 23 the chain is on the cytoplasmic side; the sequence is MVRKSPGSGKEEDFTFISPVVKY. The helical transmembrane segment at 24 to 44 threads the bilayer; sequence LLIFFNMLFWVISMVMVGIGV. Over 45–63 the chain is Extracellular; the sequence is YARLLKHAEAAMACLAVDP. A helical transmembrane segment spans residues 64–84; that stretch reads ALLLIGVGILMFLITFCGCIG. Topologically, residues 85-95 are cytoplasmic; that stretch reads SLRENICLLQT. Residues 96-116 form a helical membrane-spanning segment; sequence FSICLTLVFLLQLAVGIVGFI. At 117–226 the chain is on the extracellular side; that stretch reads FSDKARGKVS…FIHTNGCIDR (110 aa). 4 cysteine pairs are disulfide-bonded: C155-C223, C156-C188, C172-C182, and C189-C202. 2 N-linked (GlcNAc...) asparagine glycosylation sites follow: N171 and N176. A helical transmembrane segment spans residues 227-247; it reads LVNWIHSNLFLLGGVALGLAI. At 248–268 the chain is on the cytoplasmic side; it reads PQVTKHLRAKLIYTWRIGIQV.

The protein belongs to the tetraspanin (TM4SF) family. In terms of assembly, homodimer; disulfide-linked.

It is found in the cell membrane. It localises to the cell junction. Its subcellular location is the adherens junction. The protein localises to the cytoplasm. Functionally, part of TspanC8 subgroup, composed of 6 members that interact with the transmembrane metalloprotease ADAM10. This interaction is required for ADAM10 exit from the endoplasmic reticulum and for enzymatic maturation and trafficking to the cell surface as well as substrate specificity. Different TspanC8/ADAM10 complexes have distinct substrates. This Xenopus laevis (African clawed frog) protein is Tetraspanin-33 (tspan33).